Consider the following 362-residue polypeptide: Methionine import ATP-binding protein MetN (362 aa).

The region spanning 2 to 241 (IHIKNLSKTY…PQHDVTRAMV (240 aa)) is the ABC transporter domain. 38 to 45 (GPSGAGKS) is a binding site for ATP.

This sequence belongs to the ABC transporter superfamily. Methionine importer (TC 3.A.1.24) family. In terms of assembly, the complex is composed of two ATP-binding proteins (MetN), two transmembrane proteins (MetI) and a solute-binding protein (MetQ).

The protein localises to the cell inner membrane. The catalysed reaction is L-methionine(out) + ATP + H2O = L-methionine(in) + ADP + phosphate + H(+). It carries out the reaction D-methionine(out) + ATP + H2O = D-methionine(in) + ADP + phosphate + H(+). Part of the ABC transporter complex MetNIQ involved in methionine import. Responsible for energy coupling to the transport system. The polypeptide is Methionine import ATP-binding protein MetN (Bordetella avium (strain 197N)).